The chain runs to 105 residues: Large ribosomal subunit protein uL24 (105 aa).

Belongs to the universal ribosomal protein uL24 family. As to quaternary structure, part of the 50S ribosomal subunit.

One of two assembly initiator proteins, it binds directly to the 5'-end of the 23S rRNA, where it nucleates assembly of the 50S subunit. Its function is as follows. One of the proteins that surrounds the polypeptide exit tunnel on the outside of the subunit. The sequence is that of Large ribosomal subunit protein uL24 from Rhodospirillum centenum (strain ATCC 51521 / SW).